The primary structure comprises 767 residues: Photosystem I P700 chlorophyll a apoprotein A1 (767 aa).

Residues 1–22 form a disordered region; sequence MTISPPESGEKDKKILESPVKA. Positions 8–22 are enriched in basic and acidic residues; the sequence is SGEKDKKILESPVKA. 8 consecutive transmembrane segments (helical) span residues 76–99, 162–185, 201–225, 309–327, 368–391, 407–433, 455–477, and 558–576; these read IFSA…FHGA, LMAL…FHYH, LNHH…HIGA, VSHH…GHMY, RHAQ…HHMY, LGLF…IAMV, ALIS…LYIH, and LMIH…LILL. [4Fe-4S] cluster-binding residues include Cys-600 and Cys-609. Helical transmembrane passes span 616 to 637 and 681 to 703; these read HVFL…HFSW and ISMY…MFLF. Divinylchlorophyll a' is bound at residue His-692. Residues Met-700 and Tyr-708 each contribute to the divinyl chlorophyll a site. Trp-709 contributes to the phylloquinone binding site. The chain crosses the membrane as a helical span at residues 741-761; sequence AVGVTHFLVGGIATTWAFFHA.

This sequence belongs to the PsaA/PsaB family. In terms of assembly, the PsaA/B heterodimer binds the P700 divinyl chlorophyll special pair and subsequent electron acceptors. PSI consists of a core antenna complex that captures photons, and an electron transfer chain that converts photonic excitation into a charge separation. The cyanobacterial PSI reaction center is composed of one copy each of PsaA,B,C,D,E,F,I,J,K,L,M and X, and forms trimeric complexes. PSI electron transfer chain: 5 divinyl chlorophyll a, 1 divinyl chlorophyll a', 2 phylloquinones and 3 4Fe-4S clusters. PSI core antenna: 90 divinyl chlorophyll a, 22 carotenoids, 3 phospholipids and 1 galactolipid. P700 is a divinyl chlorophyll a/divinyl chlorophyll a' dimer, A0 is one or more divinyl chlorophyll a, A1 is one or both phylloquinones and FX is a shared 4Fe-4S iron-sulfur center. serves as cofactor.

Its subcellular location is the cellular thylakoid membrane. It carries out the reaction reduced [plastocyanin] + hnu + oxidized [2Fe-2S]-[ferredoxin] = oxidized [plastocyanin] + reduced [2Fe-2S]-[ferredoxin]. In terms of biological role, psaA and PsaB bind P700, the primary electron donor of photosystem I (PSI), as well as the electron acceptors A0, A1 and FX. PSI is a plastocyanin/cytochrome c6-ferredoxin oxidoreductase, converting photonic excitation into a charge separation, which transfers an electron from the donor P700 chlorophyll pair to the spectroscopically characterized acceptors A0, A1, FX, FA and FB in turn. Oxidized P700 is reduced on the lumenal side of the thylakoid membrane by plastocyanin or cytochrome c6. This is Photosystem I P700 chlorophyll a apoprotein A1 from Prochlorococcus marinus subsp. pastoris (strain CCMP1986 / NIES-2087 / MED4).